Consider the following 121-residue polypeptide: Small ribosomal subunit protein uS13 (121 aa).

The interval 96-121 (PVRGQNTKNNARTRKGKAVAIAGKKK) is disordered. Positions 106-121 (ARTRKGKAVAIAGKKK) are enriched in basic residues.

The protein belongs to the universal ribosomal protein uS13 family. Part of the 30S ribosomal subunit. Forms a loose heterodimer with protein S19. Forms two bridges to the 50S subunit in the 70S ribosome.

Located at the top of the head of the 30S subunit, it contacts several helices of the 16S rRNA. In the 70S ribosome it contacts the 23S rRNA (bridge B1a) and protein L5 of the 50S subunit (bridge B1b), connecting the 2 subunits; these bridges are implicated in subunit movement. Contacts the tRNAs in the A and P-sites. This Streptococcus suis (strain 05ZYH33) protein is Small ribosomal subunit protein uS13.